The primary structure comprises 738 residues: NADH dehydrogenase [ubiquinone] iron-sulfur protein 1, mitochondrial (738 aa).

A mitochondrion-targeting transit peptide spans 1–27; sequence MGLGLLASRALRSSRIIRNSTRTIVST. Residues 66–144 enclose the 2Fe-2S ferredoxin-type domain; it reads DVIEVFVDGY…GMKIKTDTPI (79 aa). Positions 100, 111, 114, and 128 each coordinate [2Fe-2S] cluster. One can recognise a 4Fe-4S His(Cys)3-ligated-type domain in the interval 144–183; that stretch reads IAKKAREGVMEFLLMNHPLDCPICDQGGECDLQDQSMAFG. [4Fe-4S] cluster is bound by residues His160, Cys164, Cys167, Cys173, Cys212, Cys215, Cys218, and Cys262. In terms of domain architecture, 4Fe-4S Mo/W bis-MGD-type spans 281-337; the sequence is LKGTESIDVTDAVGSNIRIDSRGPEVMRVVPRLNEDINEEWISDKTRFFYDGLKRQR.

It belongs to the complex I 75 kDa subunit family. As to quaternary structure, complex I is composed of about 45 different subunits. This is a component of the iron-sulfur (IP) fragment of the enzyme. [2Fe-2S] cluster is required as a cofactor. [4Fe-4S] cluster serves as cofactor.

It localises to the mitochondrion inner membrane. The enzyme catalyses a ubiquinone + NADH + 5 H(+)(in) = a ubiquinol + NAD(+) + 4 H(+)(out). Functionally, core subunit of the mitochondrial membrane respiratory chain NADH dehydrogenase (Complex I) that is believed to belong to the minimal assembly required for catalysis. Complex I functions in the transfer of electrons from NADH to the respiratory chain. The immediate electron acceptor for the enzyme is believed to be ubiquinone. This is the largest subunit of complex I and it is a component of the iron-sulfur (IP) fragment of the enzyme. It may form part of the active site crevice where NADH is oxidized. In Solanum tuberosum (Potato), this protein is NADH dehydrogenase [ubiquinone] iron-sulfur protein 1, mitochondrial.